The sequence spans 864 residues: Nitrate reductase [NADH] (864 aa).

Residue Cys139 coordinates Mo-molybdopterin. The Cytochrome b5 heme-binding domain occupies 497–572; it reads PRQYTMEEVA…LAQYYIGDLV (76 aa). Residues His532 and His555 each coordinate heme. Positions 606 to 718 constitute an FAD-binding FR-type domain; sequence RQKVKLPLIE…KGPLGHFVYD (113 aa). Residues 658 to 661, 675 to 679, Phe680, Phe687, 692 to 694, and Thr746 contribute to the FAD site; these read RAYT, LIKVY, and KMS.

The protein belongs to the nitrate reductase family. In terms of assembly, homodimer. Requires FAD as cofactor. It depends on heme as a cofactor. Mo-molybdopterin is required as a cofactor.

The catalysed reaction is nitrite + NAD(+) + H2O = nitrate + NADH + H(+). Its function is as follows. Nitrate reductase is a key enzyme involved in the first step of nitrate assimilation in plants, fungi and bacteria. The sequence is that of Nitrate reductase [NADH] (NITA) from Volvox carteri (Green alga).